Consider the following 189-residue polypeptide: Batroxicidin (189 aa).

The signal sequence occupies residues Met1–Ala22. Positions His23–Val155 are excised as a propeptide. 2 disulfide bridges follow: Cys79–Cys90 and Cys101–Cys118. Residues Glu125–Glu148 are compositionally biased toward acidic residues. The segment at Glu125–Pro152 is disordered.

The protein belongs to the cathelicidin family. As to expression, expressed by the venom gland.

It is found in the secreted. It localises to the target cell membrane. In terms of biological role, potent antimicrobial peptide against Gram-negative (MIC=0.25 ug/ml against E.coli ATCC 25922, MIC=1 ug/ml against P.aeruginosa) and Gram-positive bacteria (MIC=32 ug/ml against E.faecalis, MIC=32 ug/ml against S.aureus). Adopts an amphipathic alpha helical conformation, that may allow to partition into the target membrane. Low hemolytic activities have been observed on mammalian cells. In addition, when tested in vitro on the parasite Trypanosoma cruzi (responsible of the Chagas disease), is able to reduce the number of the three forms (epimastigote, trypomastigote and amastigote) by inducing cell death through necrosis. The sequence is that of Batroxicidin from Bothrops atrox (Barba amarilla).